The following is a 37-amino-acid chain: NADH dehydrogenase [ubiquinone] 1 alpha subcomplex subunit 5 (37 aa).

Belongs to the complex I NDUFA5 subunit family. Complex I is composed of about 45 different subunits.

The protein resides in the mitochondrion inner membrane. Functionally, accessory subunit of the mitochondrial membrane respiratory chain NADH dehydrogenase (Complex I), that is believed not to be involved in catalysis. Complex I functions in the transfer of electrons from NADH to the respiratory chain. The immediate electron acceptor for the enzyme is believed to be ubiquinone. This Solanum tuberosum (Potato) protein is NADH dehydrogenase [ubiquinone] 1 alpha subcomplex subunit 5.